The following is a 405-amino-acid chain: Tryptophan synthase beta chain (405 aa).

Lysine 98 carries the N6-(pyridoxal phosphate)lysine modification.

Belongs to the TrpB family. In terms of assembly, tetramer of two alpha and two beta chains. Pyridoxal 5'-phosphate serves as cofactor.

The enzyme catalyses (1S,2R)-1-C-(indol-3-yl)glycerol 3-phosphate + L-serine = D-glyceraldehyde 3-phosphate + L-tryptophan + H2O. Its pathway is amino-acid biosynthesis; L-tryptophan biosynthesis; L-tryptophan from chorismate: step 5/5. Functionally, the beta subunit is responsible for the synthesis of L-tryptophan from indole and L-serine. In Xanthomonas axonopodis pv. citri (strain 306), this protein is Tryptophan synthase beta chain.